Reading from the N-terminus, the 488-residue chain is ATP synthase subunit beta (488 aa).

164–171 (GGAGVGKT) contacts ATP.

This sequence belongs to the ATPase alpha/beta chains family. F-type ATPases have 2 components, CF(1) - the catalytic core - and CF(0) - the membrane proton channel. CF(1) has five subunits: alpha(3), beta(3), gamma(1), delta(1), epsilon(1). CF(0) has four main subunits: a(1), b(1), b'(1) and c(9-12).

It localises to the cellular thylakoid membrane. The enzyme catalyses ATP + H2O + 4 H(+)(in) = ADP + phosphate + 5 H(+)(out). Functionally, produces ATP from ADP in the presence of a proton gradient across the membrane. The catalytic sites are hosted primarily by the beta subunits. The sequence is that of ATP synthase subunit beta from Prochlorococcus marinus (strain NATL1A).